The chain runs to 303 residues: Serine/threonine-protein phosphatase 6 catalytic subunit (303 aa).

Residues Asp51, His53, Asp79, and Asn111 each contribute to the Mn(2+) site. His112 functions as the Proton donor in the catalytic mechanism. Residues His161 and His235 each coordinate Mn(2+).

This sequence belongs to the PPP phosphatase family. PP-6 (PP-V) subfamily. The cofactor is Mn(2+).

The protein resides in the cytoplasm. It carries out the reaction O-phospho-L-seryl-[protein] + H2O = L-seryl-[protein] + phosphate. The enzyme catalyses O-phospho-L-threonyl-[protein] + H2O = L-threonyl-[protein] + phosphate. May be involved in controlling cellularization or in regulating transcription of the genes involved in this process. The sequence is that of Serine/threonine-protein phosphatase 6 catalytic subunit (PpV) from Drosophila melanogaster (Fruit fly).